Reading from the N-terminus, the 341-residue chain is Transcription factor JunD (341 aa).

Residues 21–49 are disordered; the sequence is VAGAAGAPGGGGFAPPGRAFPGAPPTSSM. The Menin-binding motif (MBM) signature appears at 35-47; it reads PPGRAFPGAPPTS. Positions 51 to 60 match the MAP kinase docking motif; essential for its phosphorylation motif; that stretch reads KKDALTLSLA. A disordered region spans residues 65 to 85; it reads AGLKPGSATAPSALRPDGAPD. A Phosphoserine modification is found at S90. S100 is subject to Phosphoserine; by MAPK8. Residue T117 is modified to Phosphothreonine. A disordered region spans residues 155-176; that stretch reads AATAATSGAPAPPAPADLAATP. S245, S249, and S253 each carry phosphoserine. A basic motif region spans residues 262 to 289; the sequence is RIKAERKRLRNRIAASKCRKRKLERISR. A bZIP domain is found at 262-325; that stretch reads RIKAERKRLR…AQLKQKVLSH (64 aa). The tract at residues 290-318 is leucine-zipper; the sequence is LEEKVKTLKSQNTELASTASLLREQVAQL.

Belongs to the bZIP family. Jun subfamily. In terms of assembly, heterodimer; binds DNA as a heterodimer. Component of an AP-1 transcription factor complex composed of JUN-FOS heterodimers. As part of the AP-1 transcription factor complex, forms heterodimers with FOS proteins, thereby binding to the AP-1 consensus sequence and stimulating transcription. Forms heterodimers with FOSB; thereby binding to the AP-1 consensus sequence. Interacts (via MBM motif) with MEN1; this interaction represses transcriptional activation. Interacts with MAPK10; this interaction is inhibited in the presence of MEN1. In terms of processing, phosphorylated by MAP kinases MAPK8 and MAPK10; phosphorylation is inhibited in the presence of MEN1.

It localises to the nucleus. In terms of biological role, transcription factor binding AP-1 sites. Heterodimerizes with proteins of the FOS family to form an AP-1 transcription factor complex, thereby enhancing their DNA binding activity to an AP-1 consensus sequence 3'-TGA[GC]TCA-5' and enhancing their transcriptional activity. The chain is Transcription factor JunD (Jund) from Rattus norvegicus (Rat).